Here is a 388-residue protein sequence, read N- to C-terminus: Transposase for insertion sequence element IS406 (388 aa).

Belongs to the transposase mutator family.

Functionally, required for the transposition of the insertion element. This chain is Transposase for insertion sequence element IS406, found in Burkholderia multivorans (strain ATCC 17616 / 249).